Consider the following 845-residue polypeptide: ATPase morc-1 (845 aa).

ATP contacts are provided by residues N43, 88 to 90, and 97 to 103; these read SAK and RYGNGLK. N43 serves as a coordination point for Mg(2+). Positions 284–311 form a coiled coil; that stretch reads AAYNKILDEKNETVKKCEEEKALVMSEI. K422 is a binding site for ATP. Disordered regions lie at residues 566 to 590 and 628 to 739; these read LPQKRLTNSAPSSSDSQNSIRSASS and KMEP…GKAV. The segment covering 574–590 has biased composition (low complexity); it reads SAPSSSDSQNSIRSASS. A compositionally biased stretch (basic and acidic residues) spans 637–646; that stretch reads HDSHIAEVQR.

As to quaternary structure, predominantly forms monomers and dimers, but multimerizes to form trimers and tetramers upon DNA binding. Expressed in germline and somatic cells.

The protein resides in the nucleus. It localises to the nuclear body. It carries out the reaction ATP + H2O = ADP + phosphate + H(+). Its function is as follows. Binds non-specifically to DNA and forms static foci which grow by recruiting other morc-1 molecules, and thereby stimulates conformational changes and compaction of DNA, which appears to be enhanced by ATP-binding, but does not require ATP activity. Preferentially binds to long DNAs. Compacts and entraps segments of DNA by sequentially forming loops along the DNA, beginning at the free ends of single- and double-tethered DNA. Does not extrude the DNA loops on compacted double-tethered DNA. Involved in gene silencing. Plays a role in germline RNA interference (RNAi), and in particular, the silencing of endogenous small interfering RNA (endo-siRNA) target genes. May play a role in heterochromatin localization and condensation, and the siRNAi-directed trimethylation of 'Lys-9' of histone H3 in hermaphrodite X chromosomes. Promotes transgenerational epigenetic inheritance and germline immortality. In Caenorhabditis elegans, this protein is ATPase morc-1.